The following is a 323-amino-acid chain: Iron-sulfur cluster transfer protein NUBPL (323 aa).

An ATP-binding site is contributed by 65–72; that stretch reads AKGGVGKS.

The protein belongs to the Mrp/NBP35 ATP-binding proteins family. The cofactor is [4Fe-4S] cluster.

The protein localises to the mitochondrion. Functionally, iron-sulfur cluster transfer protein involved in the assembly of the mitochondrial membrane respiratory chain NADH dehydrogenase (Complex I). May deliver one or more Fe-S clusters to complex I subunits. The polypeptide is Iron-sulfur cluster transfer protein NUBPL (nubpl) (Dictyostelium discoideum (Social amoeba)).